A 475-amino-acid polypeptide reads, in one-letter code: Ankyrin repeat, SAM and basic leucine zipper domain-containing protein 1 (475 aa).

A disordered region spans residues 1–24; the sequence is MAAGPLRGLAVAGGGESSESEDDG. Serine 17, serine 18, and serine 20 each carry phosphoserine. ANK repeat units lie at residues 45–74, 78–107, 110–144, 148–177, 181–210, and 214–243; these read ERQE…SVDT, YGWT…NASF, DKQT…DPNV, RLMT…EVNT, NGYT…NKMI, and DGKT…PLEG. An SAM domain is found at 272-334; it reads SYTAFGDLEI…KIMAALKELE (63 aa).

As to quaternary structure, interacts with DDX4, PIWIL1, RANBP9 and TDRD1.

The protein resides in the cytoplasm. Its function is as follows. Plays a central role during spermatogenesis by repressing transposable elements and preventing their mobilization, which is essential for the germline integrity. Acts via the piRNA metabolic process, which mediates the repression of transposable elements during meiosis by forming complexes composed of piRNAs and Piwi proteins and governs the methylation and subsequent repression of transposons. Its association with pi-bodies suggests a participation in the primary piRNAs metabolic process. Required prior to the pachytene stage to facilitate the production of multiple types of piRNAs, including those associated with repeats involved in the regulation of retrotransposons. May act by mediating protein-protein interactions during germ cell maturation. In Ovis aries (Sheep), this protein is Ankyrin repeat, SAM and basic leucine zipper domain-containing protein 1 (ASZ1).